Reading from the N-terminus, the 369-residue chain is Biglycan (369 aa).

The N-terminal stretch at Met-1–Ala-16 is a signal peptide. Residues Leu-17–Asn-37 constitute a propeptide that is removed on maturation. O-linked (Xyl...) (glycosaminoglycan) serine glycosylation is found at Ser-42 and Ser-48. Cystine bridges form between Cys-64–Cys-70 and Cys-68–Cys-77. 12 LRR repeats span residues Lys-83–Ile-103, Ser-104–Ile-127, Ser-128–Leu-151, Val-152–Ile-172, Arg-173–Leu-196, Glu-197–Leu-221, Thr-222–Ile-242, Gln-243–Ile-266, Arg-267–Leu-290, Ser-291–Ile-313, Thr-314–Val-343, and Pro-344–Lys-369. Residues Asn-271 and Asn-312 are each glycosylated (N-linked (GlcNAc...) asparagine). A disulfide bridge connects residues Cys-322 and Cys-355.

Belongs to the small leucine-rich proteoglycan (SLRP) family. SLRP class I subfamily. As to quaternary structure, homodimer. Forms a ternary complex with MFAP2 and ELN. In terms of processing, the two attached glycosaminoglycan chains can be either chondroitin sulfate or dermatan sulfate. In terms of tissue distribution, found in several connective tissues, especially in articular cartilages.

It is found in the secreted. The protein localises to the extracellular space. It localises to the extracellular matrix. Functionally, may be involved in collagen fiber assembly. The sequence is that of Biglycan (BGN) from Ovis aries (Sheep).